A 317-amino-acid polypeptide reads, in one-letter code: L-lactate dehydrogenase (317 aa).

Residues valine 16, aspartate 37, lysine 42, tyrosine 68, and 82-83 (GA) each bind NAD(+). Substrate-binding residues include glutamine 85 and arginine 91. NAD(+) contacts are provided by residues threonine 104, 121–123 (ATN), and serine 146. 123-126 (NPVD) contributes to the substrate binding site. 151–154 (DTAR) serves as a coordination point for substrate. Beta-D-fructose 1,6-bisphosphate contacts are provided by arginine 156 and histidine 171. The Proton acceptor role is filled by histidine 178. Residue tyrosine 222 is modified to Phosphotyrosine. Threonine 231 is a substrate binding site.

It belongs to the LDH/MDH superfamily. LDH family. Homotetramer.

It localises to the cytoplasm. It carries out the reaction (S)-lactate + NAD(+) = pyruvate + NADH + H(+). Its pathway is fermentation; pyruvate fermentation to lactate; (S)-lactate from pyruvate: step 1/1. Allosterically activated by fructose 1,6-bisphosphate (FBP). Functionally, catalyzes the conversion of lactate to pyruvate. This Corynebacterium efficiens (strain DSM 44549 / YS-314 / AJ 12310 / JCM 11189 / NBRC 100395) protein is L-lactate dehydrogenase.